The sequence spans 431 residues: Probable zinc metalloprotease Lema_P086240 (431 aa).

Asn-46 carries an N-linked (GlcNAc...) asparagine glycan. The Zn(2+) site is built by His-117, Asp-137, and Glu-170. An N-linked (GlcNAc...) asparagine glycan is attached at Asn-185. Residue Asp-197 participates in Zn(2+) binding. Asn-258, Asn-310, Asn-349, Asn-359, and Asn-369 each carry an N-linked (GlcNAc...) asparagine glycan. The Fibronectin type-III domain occupies 344–431 (PGMPRNVTID…KSPAVYPFPG (88 aa)).

Belongs to the peptidase M28 family. M28B subfamily. Zn(2+) serves as cofactor.

The protein resides in the secreted. The chain is Probable zinc metalloprotease Lema_P086240 from Leptosphaeria maculans (strain JN3 / isolate v23.1.3 / race Av1-4-5-6-7-8) (Blackleg fungus).